Reading from the N-terminus, the 510-residue chain is NAD(P)H-quinone oxidoreductase subunit 2, chloroplastic (510 aa).

A run of 12 helical transmembrane segments spans residues Leu24–Leu44, Trp59–Trp79, Ile99–Ile119, Met124–Cys144, Leu149–Tyr169, Tyr183–Gly203, Ile229–Phe249, Trp295–Ile315, Met323–Asp343, Tyr354–Leu374, Ala395–Phe415, and Leu418–Leu438.

The protein belongs to the complex I subunit 2 family. NDH is composed of at least 16 different subunits, 5 of which are encoded in the nucleus.

The protein localises to the plastid. It is found in the chloroplast thylakoid membrane. It catalyses the reaction a plastoquinone + NADH + (n+1) H(+)(in) = a plastoquinol + NAD(+) + n H(+)(out). The enzyme catalyses a plastoquinone + NADPH + (n+1) H(+)(in) = a plastoquinol + NADP(+) + n H(+)(out). In terms of biological role, NDH shuttles electrons from NAD(P)H:plastoquinone, via FMN and iron-sulfur (Fe-S) centers, to quinones in the photosynthetic chain and possibly in a chloroplast respiratory chain. The immediate electron acceptor for the enzyme in this species is believed to be plastoquinone. Couples the redox reaction to proton translocation, and thus conserves the redox energy in a proton gradient. This Ensete ventricosum (Abyssinian banana) protein is NAD(P)H-quinone oxidoreductase subunit 2, chloroplastic.